Consider the following 414-residue polypeptide: Peptide chain release factor subunit 1 (414 aa).

It belongs to the eukaryotic release factor 1 family. Heterodimer of two subunits, one of which binds GTP.

It is found in the cytoplasm. Its function is as follows. Directs the termination of nascent peptide synthesis (translation) in response to the termination codons UAA, UAG and UGA. The chain is Peptide chain release factor subunit 1 (prf1) from Pyrococcus abyssi (strain GE5 / Orsay).